A 453-amino-acid polypeptide reads, in one-letter code: Protein FAM117A (453 aa).

The span at M1–R25 shows a compositional bias: gly residues. Positions M1–R45 are disordered. Residues S29 and S67 each carry the phosphoserine modification. Residues T149–E175 adopt a coiled-coil conformation. The segment at K159 to S201 is disordered. Residues S178, S193, S201, and S213 each carry the phosphoserine modification. Low complexity predominate over residues S269 to P278. Residues S269 to P320 form a disordered region. T299 carries the post-translational modification Phosphothreonine. Phosphoserine occurs at positions 319 and 327. At T354 the chain carries Phosphothreonine. Positions G406–P416 are enriched in pro residues. The interval G406–V453 is disordered. Residues S413 and S428 each carry the phosphoserine modification.

Belongs to the FAM117 family.

The sequence is that of Protein FAM117A (FAM117A) from Homo sapiens (Human).